The chain runs to 239 residues: UPF0126 membrane protein VC_2382 (239 aa).

The next 6 membrane-spanning stretches (helical) occupy residues 38 to 58, 62 to 82, 86 to 106, 122 to 142, 153 to 173, and 185 to 205; these read LLYL…VLLA, KMDP…GGTI, ALGA…VIMI, AWWI…GIGV, LIAI…RDVL, and VYAT…AMGY.

Belongs to the UPF0126 family.

The protein resides in the cell membrane. This Vibrio cholerae serotype O1 (strain ATCC 39315 / El Tor Inaba N16961) protein is UPF0126 membrane protein VC_2382.